The primary structure comprises 352 residues: Fe(3+) ions import ATP-binding protein FbpC (352 aa).

The 235-residue stretch at 5-239 (LHIGHLSKSF…PADLDAVLFI (235 aa)) folds into the ABC transporter domain. 37 to 44 (GASGCGKT) contributes to the ATP binding site.

This sequence belongs to the ABC transporter superfamily. Fe(3+) ion importer (TC 3.A.1.10) family. The complex is composed of two ATP-binding proteins (FbpC), two transmembrane proteins (FbpB) and a solute-binding protein (FbpA).

The protein resides in the cell inner membrane. It catalyses the reaction Fe(3+)(out) + ATP + H2O = Fe(3+)(in) + ADP + phosphate + H(+). Functionally, part of the ABC transporter complex FbpABC involved in Fe(3+) ions import. Responsible for energy coupling to the transport system. The sequence is that of Fe(3+) ions import ATP-binding protein FbpC from Neisseria gonorrhoeae.